The sequence spans 352 residues: Tubby-like F-box protein 10 (352 aa).

Residues 1–11 (MAAVREPREEA) show a composition bias toward basic and acidic residues. The disordered stretch occupies residues 1–23 (MAAVREPREEAAVGEGEGEEEGR). The F-box domain maps to 22 to 78 (GRWGGLLPELVEEVVRRVEASGGERWPARKDLVSCACVCRRWREAAAAVVRPLPESG).

The protein belongs to the TUB family. Ubiquitous.

This chain is Tubby-like F-box protein 10 (TULP10), found in Oryza sativa subsp. japonica (Rice).